The following is a 156-amino-acid chain: Small ribosomal subunit protein uS7 (156 aa).

It belongs to the universal ribosomal protein uS7 family. Part of the 30S ribosomal subunit. Contacts proteins S9 and S11.

Its function is as follows. One of the primary rRNA binding proteins, it binds directly to 16S rRNA where it nucleates assembly of the head domain of the 30S subunit. Is located at the subunit interface close to the decoding center, probably blocks exit of the E-site tRNA. The sequence is that of Small ribosomal subunit protein uS7 from Carsonella ruddii.